Reading from the N-terminus, the 197-residue chain is Phospholipid hydroperoxide glutathione peroxidase (197 aa).

Position 40 is a phosphoserine (Ser40). The active site involves Sec73. A non-standard amino acid (selenocysteine) is located at residue Sec73.

It belongs to the glutathione peroxidase family. In terms of assembly, monomer. Has a tendency to form higher mass oligomers. Interacts with FUNDC1; this interaction promotes GPX4 recruitment into mitochondria through TOM/TIM complex where it is degraded by mitophagy.

The protein localises to the mitochondrion. It is found in the cytoplasm. The catalysed reaction is a hydroperoxy polyunsaturated fatty acid + 2 glutathione = a hydroxy polyunsaturated fatty acid + glutathione disulfide + H2O. It carries out the reaction (12S)-hydroperoxy-(5Z,8Z,10E,14Z)-eicosatetraenoate + 2 glutathione = (12S)-hydroxy-(5Z,8Z,10E,14Z)-eicosatetraenoate + glutathione disulfide + H2O. It catalyses the reaction (13S)-hydroperoxy-(9Z,11E)-octadecadienoate + 2 glutathione = (13S)-hydroxy-(9Z,11E)-octadecadienoate + glutathione disulfide + H2O. Essential antioxidant peroxidase that directly reduces phospholipid hydroperoxide even if they are incorporated in membranes and lipoproteins. Can also reduce fatty acid hydroperoxide, cholesterol hydroperoxide and thymine hydroperoxide. Plays a key role in protecting cells from oxidative damage by preventing membrane lipid peroxidation. Required to prevent cells from ferroptosis, a non-apoptotic cell death resulting from an iron-dependent accumulation of lipid reactive oxygen species. The presence of selenocysteine (Sec) versus Cys at the active site is essential for life: it provides resistance to overoxidation and prevents cells against ferroptosis. The presence of Sec at the active site is also essential for the survival of a specific type of parvalbumin-positive interneurons, thereby preventing against fatal epileptic seizures. May be required to protect cells from the toxicity of ingested lipid hydroperoxides. Required for normal sperm development and male fertility. Essential for maturation and survival of photoreceptor cells. Plays a role in a primary T-cell response to viral and parasitic infection by protecting T-cells from ferroptosis and by supporting T-cell expansion. Plays a role of glutathione peroxidase in platelets in the arachidonic acid metabolism. Reduces hydroperoxy ester lipids formed by a 15-lipoxygenase that may play a role as down-regulator of the cellular 15-lipoxygenase pathway. The sequence is that of Phospholipid hydroperoxide glutathione peroxidase from Sapajus apella (Brown-capped capuchin).